A 300-amino-acid polypeptide reads, in one-letter code: Cation-efflux pump FieF (300 aa).

The chain crosses the membrane as a helical span at residues 24-44 (LLIKIFAWWYTGSVSILAALV). Zn(2+) is bound by residues Asp45 and Asp49. 2 helical membrane passes run 82–102 (AALAQSMFISGSALFLFLTGI) and 114–134 (AGVGVVVTLIALVSTLALVTF). Residues His153 and Asp157 each coordinate Zn(2+). Helical transmembrane passes span 156–176 (SDVMMNGAILVALGLSWYGWH) and 178–198 (ADALFALGIGIYILYSALRMG).

Belongs to the cation diffusion facilitator (CDF) transporter (TC 2.A.4) family. FieF subfamily. As to quaternary structure, homodimer.

It is found in the cell inner membrane. The catalysed reaction is Zn(2+)(in) + H(+)(out) = Zn(2+)(out) + H(+)(in). It carries out the reaction Cd(2+)(in) + H(+)(out) = Cd(2+)(out) + H(+)(in). The enzyme catalyses Fe(2+)(in) + H(+)(out) = Fe(2+)(out) + H(+)(in). In terms of biological role, divalent metal cation transporter which exports Zn(2+), Cd(2+) and possibly Fe(2+). May be involved in zinc and iron detoxification by efflux. The chain is Cation-efflux pump FieF from Klebsiella pneumoniae subsp. pneumoniae (strain ATCC 700721 / MGH 78578).